Consider the following 564-residue polypeptide: Probable diguanylate cyclase DgcQ (564 aa).

The next 2 helical transmembrane spans lie at 20 to 40 (LGPG…STLL) and 360 to 380 (IALT…WYVI). Residues 428–563 (HPFSVIQVDL…GRNRVFASDN (136 aa)) form the GGDEF domain. Residue D436 coordinates Mg(2+). The substrate site is built by N444, H449, and D453. Position 479 (E479) interacts with Mg(2+). Catalysis depends on E479, which acts as the Proton acceptor.

In terms of assembly, homodimer. Mg(2+) is required as a cofactor.

The protein localises to the cell inner membrane. The enzyme catalyses 2 GTP = 3',3'-c-di-GMP + 2 diphosphate. It participates in glycan metabolism; bacterial cellulose biosynthesis. It functions in the pathway purine metabolism; 3',5'-cyclic di-GMP biosynthesis. Catalyzes the synthesis of cyclic-di-GMP (c-di-GMP) via the condensation of 2 GTP molecules. Cyclic-di-GMP is a second messenger which controls cell surface-associated traits in bacteria. Involved in the regulation of cellulose production. This is Probable diguanylate cyclase DgcQ from Shigella dysenteriae serotype 1 (strain Sd197).